The chain runs to 332 residues: MPFWYSNSKLIWLLSPFSLLFWLISQLRHALFCLGIKSSYRAPKPVIIVGNLSVGGNGKTPVVVWLVEELKKRGLRVGVISRGYGSKSKTYPLFVTENTRPIEGGDEPVLIAKRTNAPVVISPNRQQAIELLLSQAECDIIVSDDGLQHYKLQRDLEIVVMDAERALGNGFVLPAGPLRELPSRLKSVDFVITNGGKNQYSDAVMYLVPHFAINLKTNEKRQLKEFQSGVAIAGIGNPQRFFTMLEKLGIQLERTQAFQDHQHFEASQLEKLAENQPLFMTEKDAVKCQSFANDNWWYVPVDAEIIEAEKQCENLPHFWDKIDKLVAQYRNG.

Serine 53–threonine 60 contacts ATP.

This sequence belongs to the LpxK family.

It carries out the reaction a lipid A disaccharide + ATP = a lipid IVA + ADP + H(+). It functions in the pathway glycolipid biosynthesis; lipid IV(A) biosynthesis; lipid IV(A) from (3R)-3-hydroxytetradecanoyl-[acyl-carrier-protein] and UDP-N-acetyl-alpha-D-glucosamine: step 6/6. Transfers the gamma-phosphate of ATP to the 4'-position of a tetraacyldisaccharide 1-phosphate intermediate (termed DS-1-P) to form tetraacyldisaccharide 1,4'-bis-phosphate (lipid IVA). This Haemophilus influenzae (strain 86-028NP) protein is Tetraacyldisaccharide 4'-kinase.